The primary structure comprises 185 residues: ATP-dependent protease subunit HslV (185 aa).

Thr-12 is an active-site residue. Residues Ala-168, Cys-171, and Thr-174 each contribute to the Na(+) site.

The protein belongs to the peptidase T1B family. HslV subfamily. In terms of assembly, a double ring-shaped homohexamer of HslV is capped on each side by a ring-shaped HslU homohexamer. The assembly of the HslU/HslV complex is dependent on binding of ATP.

The protein localises to the cytoplasm. It carries out the reaction ATP-dependent cleavage of peptide bonds with broad specificity.. Its activity is regulated as follows. Allosterically activated by HslU binding. Functionally, protease subunit of a proteasome-like degradation complex believed to be a general protein degrading machinery. In Dinoroseobacter shibae (strain DSM 16493 / NCIMB 14021 / DFL 12), this protein is ATP-dependent protease subunit HslV.